The following is a 362-amino-acid chain: Ferredoxin--NADP reductase 1 (362 aa).

FAD is bound by residues Asp-47, Gln-55, Tyr-60, Ala-100, Phe-141, Asp-309, and Ser-350.

This sequence belongs to the ferredoxin--NADP reductase type 2 family. In terms of assembly, homodimer. FAD serves as cofactor.

It catalyses the reaction 2 reduced [2Fe-2S]-[ferredoxin] + NADP(+) + H(+) = 2 oxidized [2Fe-2S]-[ferredoxin] + NADPH. The chain is Ferredoxin--NADP reductase 1 from Cupriavidus pinatubonensis (strain JMP 134 / LMG 1197) (Cupriavidus necator (strain JMP 134)).